The sequence spans 520 residues: Cytochrome P450 monooxygenase 176 (520 aa).

The N-linked (GlcNAc...) asparagine glycan is linked to asparagine 6. The chain crosses the membrane as a helical span at residues 10–27; sequence LLVVAGALFLTFLTTRFI. Residues asparagine 141 and asparagine 270 are each glycosylated (N-linked (GlcNAc...) asparagine). Residue cysteine 445 participates in heme binding. Asparagine 517 carries an N-linked (GlcNAc...) asparagine glycan.

Belongs to the cytochrome P450 family. It depends on heme as a cofactor.

Its subcellular location is the membrane. It functions in the pathway secondary metabolite biosynthesis. In terms of biological role, cytochrome P450 monooxygenase that is able to use delta(6)-protoilludene as a substrate to produce delta(6)-protoilludene-5-ol and an unidentified hydroxyprotoilludene. Is also able to use phenanthrene as a substrate for oxidation. The chain is Cytochrome P450 monooxygenase 176 from Postia placenta (strain ATCC 44394 / Madison 698-R) (Brown rot fungus).